Reading from the N-terminus, the 504-residue chain is Maturase K (504 aa).

The protein belongs to the intron maturase 2 family. MatK subfamily.

It localises to the plastid. The protein resides in the chloroplast. Functionally, usually encoded in the trnK tRNA gene intron. Probably assists in splicing its own and other chloroplast group II introns. The protein is Maturase K of Actinidia chinensis (Kiwi).